Here is a 430-residue protein sequence, read N- to C-terminus: MRRWLTSRLYDAFLVAAFLAAAPRIFYKVVFHGKYINSWKIRFGVEKPQVKGEGPLVWFHGASVGEVSLLEPLLKKWRQEFPDWRFVVTACSEAGVYTAQRLYAPLGATVFVLPLDLSCIINPVVRSLSPQVVIFSEGDCWLHFLMGAKKLGAKAFLINGKLSENSCKRFAFLKRLGRSYFAPLDLLVLQDKVYKQRFMQIGIPEDKIQISGNLKTFIETETSINNRSLWRKKLKLSPSDRLIVLGSMHPKDVEVWADVAQHFNKFSTKILWVPRHLEKLKEHARLLEKAGISFGLWSKEDSLLQYDSLIVDAMGILKDLYSAADLAFVGGTFDPLVGGHNLLEPLQKEVPLMFGPHIHSQSVLAELLRTKEVGVSVDKENLLEAVENLLEDEKKRQAYIERGKSFLKNAGTSFEHTWEILKSQIACIKI.

Residues 12–32 (AFLVAAFLAAAPRIFYKVVFH) traverse the membrane as a helical; Signal-anchor segment. Glu66 serves as the catalytic Proton acceptor. Residues 274–275 (PR), 314–316 (MGI), and 341–344 (NLLE) contribute to the CMP site.

It belongs to the glycosyltransferase group 1 family. Glycosyltransferase 30 subfamily.

Its subcellular location is the cell inner membrane. The enzyme catalyses lipid IVA (E. coli) + CMP-3-deoxy-beta-D-manno-octulosonate = alpha-Kdo-(2-&gt;6)-lipid IVA (E. coli) + CMP + H(+). The catalysed reaction is alpha-Kdo-(2-&gt;6)-lipid IVA (E. coli) + CMP-3-deoxy-beta-D-manno-octulosonate = alpha-Kdo-(2-&gt;4)-alpha-Kdo-(2-&gt;6)-lipid IVA (E. coli) + CMP + H(+). It catalyses the reaction alpha-Kdo-(2-&gt;4)-alpha-Kdo-(2-&gt;6)-lipid IVA (E. coli) + CMP-3-deoxy-beta-D-manno-octulosonate = alpha-Kdo-(2-&gt;8)-alpha-Kdo-(2-&gt;4)-alpha-Kdo-(2-&gt;6)-lipid IVA (E. coli) + CMP + H(+). It participates in bacterial outer membrane biogenesis; LPS core biosynthesis. In terms of biological role, involved in lipopolysaccharide (LPS) biosynthesis. Catalyzes the transfer of three 3-deoxy-D-manno-octulosonate (Kdo) residues from CMP-Kdo to lipid IV(A), the tetraacyldisaccharide-1,4'-bisphosphate precursor of lipid A. Thus generates the genus-specific LPS epitope of Chlamydia, composed of the trisaccharide alpha-Kdo-(2-&gt;8)-alpha-Kdo-(2-&gt;4)-alpha-Kdo. The chain is 3-deoxy-D-manno-octulosonic acid transferase (waaA) from Chlamydia muridarum (strain MoPn / Nigg).